Reading from the N-terminus, the 267-residue chain is Cilia- and flagella-associated protein 300 (267 aa).

It belongs to the CFAP300 family.

The protein resides in the cytoplasm. It is found in the cytoskeleton. It localises to the cilium axoneme. Cilium- and flagellum-specific protein that plays a role in axonemal structure organization and motility. May play a role in outer and inner dynein arm assembly. This Xenopus tropicalis (Western clawed frog) protein is Cilia- and flagella-associated protein 300.